The sequence spans 526 residues: D-arabinono-1,4-lactone oxidase (526 aa).

Residues 22–196 form the FAD-binding PCMH-type domain; sequence FWSRPSLYFQ…VYATLRTVPA (175 aa). Residue histidine 59 is modified to Pros-8alpha-FAD histidine.

This sequence belongs to the oxygen-dependent FAD-linked oxidoreductase family. Requires FAD as cofactor.

It localises to the mitochondrion membrane. It catalyses the reaction D-arabinono-1,4-lactone + O2 = dehydro-D-arabinono-1,4-lactone + H2O2 + H(+). It functions in the pathway cofactor biosynthesis; D-erythroascorbate biosynthesis; dehydro-D-arabinono-1,4-lactone from D-arabinose: step 2/2. The sequence is that of D-arabinono-1,4-lactone oxidase (ALO1) from Yarrowia lipolytica (strain CLIB 122 / E 150) (Yeast).